The sequence spans 485 residues: REST corepressor 1 (485 aa).

Disordered stretches follow at residues 1–26 (MPAM…ASAS) and 49–110 (AAAS…VGPQ). 2 stretches are compositionally biased toward low complexity: residues 49–64 (AAAS…AAAA) and 74–95 (AAAA…SGSS). The tract at residues 78 to 257 (PNGNSSSNSW…RHARKQKRER (180 aa)) is interaction with HDAC1. The ELM2 domain occupies 103–189 (GGMRVGPQYQ…KSLADLPNFT (87 aa)). A Glycyl lysine isopeptide (Lys-Gly) (interchain with G-Cter in SUMO2) cross-link involves residue Lys-122. Ser-127 is modified (phosphoserine). The 52-residue stretch at 190-241 (PFPDEWTVEDKVLFEQAFSFHGKTFHRIQQMLPDKSIASLVKFYYSWKKTRT) folds into the SANT 1 domain. Positions 244-273 (SVMDRHARKQKREREESEDELEEANGNNPI) form a coiled coil. The disordered stretch occupies residues 244-314 (SVMDRHARKQ…AKNRAKRKPP (71 aa)). Phosphoserine is present on Ser-260. A compositionally biased stretch (basic and acidic residues) spans 278–288 (DQNKESKKEVP). An interaction with KDM1A region spans residues 296 to 384 (VKKEKHSTQA…LPEVIQKCNA (89 aa)). Lys-297 is covalently cross-linked (Glycyl lysine isopeptide (Lys-Gly) (interchain with G-Cter in SUMO2)). The stretch at 334–369 (ATTVLRQLDMELVSVKRQIQNIKQTNSALKEKLDGG) forms a coiled coil. One can recognise an SANT 2 domain in the interval 381–432 (KCNARWTTEEQLLAVQAIRKYGRDFQAISDVIGNKSVVQVKNFFVNYRRRFN). Residues 442–485 (AEHGKEETNGPSNQKPVKSPDNSIKMPEEEDEAPVLDVRYASAS) are disordered. A compositionally biased stretch (polar residues) spans 450–463 (NGPSNQKPVKSPDN). Ser-460 is subject to Phosphoserine. A Glycyl lysine isopeptide (Lys-Gly) (interchain with G-Cter in SUMO2) cross-link involves residue Lys-466.

This sequence belongs to the CoREST family. Interacts directly with GFI1 and GFI1B in a RCOR/GFI/KDM1A/HDAC complex. Interacts with INMS1. Component of a BHC histone deacetylase complex that contains HDAC1, HDAC2, HMG20B/BRAF35, KDM1A, RCOR1/CoREST and PHF21A/BHC80. The BHC complex may also contain ZMYM2, ZNF217, ZMYM3, GSE1 and GTF2I. Interacts with REST. Interacts with the SMARCE1/BAF57, suggesting that the BHC complex may recruit the ATP-dependent chromatin-remodeling SWI-SNF complex. Interacts with SOX2. In terms of assembly, (Microbial infection) Interacts with herpes virus HSV-1 ICP0 protein; the interaction leads to the disruption of the BHC complex, thereby preventing the BHC complex from repressing transcription of viral genes. Post-translationally, phosphorylated by HSV-1 protein kinases in case of infection. As to expression, ubiquitously expressed.

It localises to the nucleus. In terms of biological role, essential component of the BHC complex, a corepressor complex that represses transcription of neuron-specific genes in non-neuronal cells. The BHC complex is recruited at RE1/NRSE sites by REST and acts by deacetylating and demethylating specific sites on histones, thereby acting as a chromatin modifier. In the BHC complex, it serves as a molecular beacon for the recruitment of molecular machinery, including MeCP2 and SUV39H1, that imposes silencing across a chromosomal interval. Plays a central role in demethylation of Lys-4 of histone H3 by promoting demethylase activity of KDM1A on core histones and nucleosomal substrates. It also protects KDM1A from the proteasome. Component of a RCOR/GFI/KDM1A/HDAC complex that suppresses, via histone deacetylase (HDAC) recruitment, a number of genes implicated in multilineage blood cell development and controls hematopoietic differentiation. In Homo sapiens (Human), this protein is REST corepressor 1 (RCOR1).